The primary structure comprises 595 residues: Parathyroid hormone/parathyroid hormone-related peptide receptor (595 aa).

The N-terminal stretch at 1-28 is a signal peptide; sequence MGAVRIAPGLALLLCCPVLSSAYALVDA. Residues 29 to 188 lie on the Extracellular side of the membrane; it reads DDVMTKEEQI…REREVFDRLG (160 aa). Cystine bridges form between Cys48-Cys117, Cys108-Cys148, and Cys131-Cys170. Residues 66–103 are disordered; sequence DKGWASASTSGKPKKEKASGKLYPESEEDKEVPTGSRH. 4 N-linked (GlcNAc...) asparagine glycosylation sites follow: Asn151, Asn161, Asn166, and Asn176. A helical transmembrane segment spans residues 189 to 209; it reads MIYTVGYSVSLASLTVAVLIL. The Cytoplasmic segment spans residues 210–223; sequence AYFRRLHCTRNYIH. Residues 224 to 244 form a helical membrane-spanning segment; the sequence is MHLFLSFMLRAVSIFVKDAVL. Residues 245–294 are Extracellular-facing; that stretch reads YSGATLDEAERLTEEELRAIAQAPPPPTAAAGYAGCRVAVTFFLYFLATN. Residues 295-315 traverse the membrane as a helical segment; sequence YYWILVEGLYLHSLIFMAFFS. Residues 316 to 318 are Cytoplasmic-facing; the sequence is EKK. A helical membrane pass occupies residues 319 to 339; it reads YLWGFTVFGWGLPAVFVAVWV. Residues 340–360 lie on the Extracellular side of the membrane; it reads SVRATLANTGCWDLSSGNKKW. Residues 361 to 381 traverse the membrane as a helical segment; sequence IIQVPILASIVLNFILFINIV. Topologically, residues 382-404 are cytoplasmic; the sequence is RVLATKLRETNAGRCDTRQQYRK. A helical membrane pass occupies residues 405-425; the sequence is LLKSTLVLMPLFGVHYIVFMA. The Extracellular portion of the chain corresponds to 426–439; it reads TPYTEVSGTLWQVQ. Residues 440–460 form a helical membrane-spanning segment; that stretch reads MHYEMLFNSFQGFFVAIIYCF. Topologically, residues 461-595 are cytoplasmic; it reads CNGEVQAEIK…LLQEEWETVM (135 aa). The Important for interaction with G proteins motif lies at 473–476; the sequence is WSRW. Positions 528–595 are disordered; that stretch reads TTTATTNGHP…LLQEEWETVM (68 aa). The span at 547–559 shows a compositional bias: low complexity; the sequence is APTLPATPPATAA. Thr553 carries the phosphothreonine modification.

Belongs to the G-protein coupled receptor 2 family. Homodimer in the absence of bound ligand. Peptide hormone binding leads to dissociation of the homodimer. N-glycosylated. As to expression, high levels in the kidney, with much lower levels in aorta, heart, lung, prostate, testis, and skeletal muscle.

The protein resides in the cell membrane. Its function is as follows. G-protein-coupled receptor for parathyroid hormone (PTH) and for parathyroid hormone-related peptide (PTHLH). Ligand binding causes a conformation change that triggers signaling via guanine nucleotide-binding proteins (G proteins) and modulates the activity of downstream effectors, such as adenylate cyclase (cAMP). PTH1R is coupled to G(s) G alpha proteins and mediates activation of adenylate cyclase activity. PTHLH dissociates from PTH1R more rapidly than PTH; as consequence, the cAMP response induced by PTHLH decays faster than the response induced by PTH. The chain is Parathyroid hormone/parathyroid hormone-related peptide receptor (PTH1R) from Canis lupus familiaris (Dog).